Here is a 258-residue protein sequence, read N- to C-terminus: Hemin import ATP-binding protein HmuV (258 aa).

Positions 1–238 (MLDIDVSNLS…DILERTYRTP (238 aa)) constitute an ABC transporter domain. 34 to 41 (GENGAGKS) contributes to the ATP binding site.

This sequence belongs to the ABC transporter superfamily. Heme (hemin) importer (TC 3.A.1.14.5) family. In terms of assembly, the complex is composed of two ATP-binding proteins (HmuV), two transmembrane proteins (HmuU) and a solute-binding protein (HmuT).

The protein localises to the cell inner membrane. Part of the ABC transporter complex HmuTUV involved in hemin import. Responsible for energy coupling to the transport system. The polypeptide is Hemin import ATP-binding protein HmuV (Idiomarina loihiensis (strain ATCC BAA-735 / DSM 15497 / L2-TR)).